We begin with the raw amino-acid sequence, 34 residues long: Toxin GTx1-15 (34 aa).

3 disulfides stabilise this stretch: Cys-2/Cys-17, Cys-9/Cys-23, and Cys-16/Cys-30. Phe-34 bears the Phenylalanine amide mark.

It belongs to the neurotoxin 10 (Hwtx-1) family. 08 (Gtx1-15) subfamily. Expressed by the venom gland.

Its subcellular location is the secreted. In terms of biological role, potent voltage-gated sodium channel blocker. Potently inhibits the voltage-gated sodium channels Nav1.7/SCN9A (IC(50)=0.58-10 nM). Also shows a moderate activity on Nav1.1/SCN1A (IC(50)=6 nM), Nav1.2/SCN2A (IC(50)=5-128 nM), Nav1.3/SCN3A (IC(50)=20.3-170 nM), and Nav1.6/SCN8A (IC(50)=17-20.1 nM). Shows an unclear inhibition of Nav1.4/SCN4A (IC(50)=200 nM to &gt;10 uM), Nav1.5/SCN5A (IC(50)=140 nM to &gt;10 uM) and Nav1.8/SCN10A (IC(50)=68-12200 nM). Weakly blocks the low voltage-gated calcium channels Cav3.1/CACNA1G (30% inhibition of the peak current at 9.8 nM). shows moderate affinity for lipid bilayers. In vivo, when tested on the OD1-induced mouse model of Nav1.7/SCN9A-mediated pain, the toxin is effective when co-administered with OD1, but lacks efficacy when delivered systemically. This Grammostola porteri (Tarantula spider) protein is Toxin GTx1-15.